The chain runs to 175 residues: uncharacterized protein (175 aa).

The Extracellular portion of the chain corresponds to 1–2; that stretch reads ME. The helical transmembrane segment at 3–23 threads the bilayer; sequence SIILSIAIFIGVLLGTSVGAG. Residues 24-151 lie on the Cytoplasmic side of the membrane; it reads SGSSISPDVD…TGISTTMNAR (128 aa). The tract at residues 26 to 88 is disordered; sequence SSISPDVDAG…DVGAGSGSSI (63 aa). Polar residues predominate over residues 59 to 78; sequence FSGSSTSPDVDAGSGSSTSP. The chain crosses the membrane as a helical span at residues 152-172; that stretch reads VAVLITAAILSAPVTAIALLE. Residues 173–175 lie on the Extracellular side of the membrane; that stretch reads ARR.

Its subcellular location is the membrane. This is an uncharacterized protein from Saccharomyces cerevisiae (strain ATCC 204508 / S288c) (Baker's yeast).